Reading from the N-terminus, the 126-residue chain is Large ribosomal subunit protein uL22 (126 aa).

It belongs to the universal ribosomal protein uL22 family. In terms of assembly, part of the 50S ribosomal subunit.

This protein binds specifically to 23S rRNA; its binding is stimulated by other ribosomal proteins, e.g. L4, L17, and L20. It is important during the early stages of 50S assembly. It makes multiple contacts with different domains of the 23S rRNA in the assembled 50S subunit and ribosome. In terms of biological role, the globular domain of the protein is located near the polypeptide exit tunnel on the outside of the subunit, while an extended beta-hairpin is found that lines the wall of the exit tunnel in the center of the 70S ribosome. This Bradyrhizobium sp. (strain BTAi1 / ATCC BAA-1182) protein is Large ribosomal subunit protein uL22.